The sequence spans 224 residues: tRNA (guanine-N(7)-)-methyltransferase (224 aa).

The S-adenosyl-L-methionine site is built by Glu54, Glu79, and Asp129. The active site involves Asp129. The substrate site is built by Lys133 and Asp165.

This sequence belongs to the class I-like SAM-binding methyltransferase superfamily. TrmB family.

It catalyses the reaction guanosine(46) in tRNA + S-adenosyl-L-methionine = N(7)-methylguanosine(46) in tRNA + S-adenosyl-L-homocysteine. It functions in the pathway tRNA modification; N(7)-methylguanine-tRNA biosynthesis. Catalyzes the formation of N(7)-methylguanine at position 46 (m7G46) in tRNA. This chain is tRNA (guanine-N(7)-)-methyltransferase, found in Chlamydia pneumoniae (Chlamydophila pneumoniae).